A 156-amino-acid polypeptide reads, in one-letter code: Small ribosomal subunit protein uS7 (156 aa).

This sequence belongs to the universal ribosomal protein uS7 family. Part of the 30S ribosomal subunit. Contacts proteins S9 and S11.

In terms of biological role, one of the primary rRNA binding proteins, it binds directly to 16S rRNA where it nucleates assembly of the head domain of the 30S subunit. Is located at the subunit interface close to the decoding center, probably blocks exit of the E-site tRNA. This chain is Small ribosomal subunit protein uS7, found in Pseudoalteromonas translucida (strain TAC 125).